The primary structure comprises 347 residues: NADH-ubiquinone oxidoreductase chain 2 (347 aa).

11 helical membrane-spanning segments follow: residues Pro3–Ser23, His25–Met45, Tyr59–Leu79, Ala96–Pro116, Ile122–Leu142, Ile149–Gly169, Ile178–Pro198, Met200–Met220, Ala237–Leu257, Glu274–Met294, and Leu325–Ile345.

The protein belongs to the complex I subunit 2 family. In terms of assembly, core subunit of respiratory chain NADH dehydrogenase (Complex I) which is composed of 45 different subunits. Interacts with TMEM242.

The protein localises to the mitochondrion inner membrane. The catalysed reaction is a ubiquinone + NADH + 5 H(+)(in) = a ubiquinol + NAD(+) + 4 H(+)(out). Functionally, core subunit of the mitochondrial membrane respiratory chain NADH dehydrogenase (Complex I) which catalyzes electron transfer from NADH through the respiratory chain, using ubiquinone as an electron acceptor. Essential for the catalytic activity and assembly of complex I. This is NADH-ubiquinone oxidoreductase chain 2 from Cynictis penicillata (Yellow mongoose).